A 279-amino-acid chain; its full sequence is Protein FAM151B (279 aa).

Belongs to the menorin family.

In terms of biological role, essential for survival of retinal photoreceptor cells. In Mus musculus (Mouse), this protein is Protein FAM151B (Fam151b).